The primary structure comprises 159 residues: Putative esterase DR_2406 (159 aa).

Belongs to the thioesterase PaaI family.

This chain is Putative esterase DR_2406, found in Deinococcus radiodurans (strain ATCC 13939 / DSM 20539 / JCM 16871 / CCUG 27074 / LMG 4051 / NBRC 15346 / NCIMB 9279 / VKM B-1422 / R1).